The following is a 604-amino-acid chain: Serine/threonine-protein kinase A-Raf (604 aa).

Residues 19–91 (GTVKVYLPNK…DGEELIVEVL (73 aa)) form the RBD domain. The Phorbol-ester/DAG-type zinc-finger motif lies at 98–144 (MHNFVRKTFFSLAFCDFCLKFLFHGFRCQTCGYKFHQHCSSKVPTVC). Zn(2+) is bound by residues His99, Cys112, Cys115, Cys125, Cys128, His133, Cys136, and Cys144. A phosphoserine mark is found at Ser157 and Ser162. Disordered stretches follow at residues 178–222 (ELLT…HMVS) and 241–287 (TDAA…DEKK). A Phosphothreonine modification is found at Thr181. Ser186 carries the phosphoserine modification. The span at 210–222 (IRSTSTPNVHMVS) shows a compositional bias: polar residues. The span at 252-265 (PRGSPSPASVSSGR) shows a compositional bias: low complexity. Phosphoserine occurs at positions 255 and 267. Basic and acidic residues predominate over residues 272–287 (LPAEQRERKSLADEKK). Positions 308-568 (VQLLKRIGTG…PQILATIELL (261 aa)) constitute a Protein kinase domain. Residues 314 to 322 (IGTGSFGTV) and Lys334 contribute to the ATP site. A Phosphothreonine modification is found at Thr316. Asp427 (proton acceptor) is an active-site residue.

This sequence belongs to the protein kinase superfamily. TKL Ser/Thr protein kinase family. RAF subfamily. In terms of assembly, interacts with TH1L/NELFD. Zn(2+) serves as cofactor. Post-translationally, dephosphorylation by the SHOC2-MRAS-PP1c (SMP) complex consisting of SHOC2, GTP-bound M-Ras/MRAS and the catalytic subunit of protein phosphatase 1 (PPP1CA, PPP1CB or PPP1CC); this relieves inactivation and stimulates kinase activity.

It catalyses the reaction L-seryl-[protein] + ATP = O-phospho-L-seryl-[protein] + ADP + H(+). It carries out the reaction L-threonyl-[protein] + ATP = O-phospho-L-threonyl-[protein] + ADP + H(+). Its function is as follows. Involved in the transduction of mitogenic signals from the cell membrane to the nucleus. May also regulate the TOR signaling cascade. Phosphorylates PFKFB2. In Rattus norvegicus (Rat), this protein is Serine/threonine-protein kinase A-Raf (Araf).